The following is a 706-amino-acid chain: Glutamine-dependent NAD(+) synthetase (706 aa).

The CN hydrolase domain maps to 5–275 (VTVATCALNQ…VEVLTATLDL (271 aa)). Glutamate 45 serves as the catalytic Proton acceptor; for glutaminase activity. Lysine 114 functions as the For glutaminase activity in the catalytic mechanism. Cysteine 175 serves as the catalytic Nucleophile; for glutaminase activity. The segment at 325 to 706 (YHSPEEEISL…AEPQSLDGVD (382 aa)) is ligase. Residue 355–362 (PLSGGVDS) participates in ATP binding. Serine 357 is an active-site residue.

It in the C-terminal section; belongs to the NAD synthetase family. Homohexamer.

It catalyses the reaction deamido-NAD(+) + L-glutamine + ATP + H2O = L-glutamate + AMP + diphosphate + NAD(+) + H(+). It functions in the pathway cofactor biosynthesis; NAD(+) biosynthesis; NAD(+) from deamido-NAD(+) (L-Gln route): step 1/1. Its function is as follows. Catalyzes the final step of the nicotinamide adenine dinucleotide (NAD) de novo synthesis pathway, the ATP-dependent amidation of deamido-NAD using L-glutamine as a nitrogen source. This is Glutamine-dependent NAD(+) synthetase (NADSYN1) from Homo sapiens (Human).